The primary structure comprises 635 residues: Protein MICRORCHIDIA 1 (635 aa).

Residues 491–511 are disordered; the sequence is RTVIPDQPPTVNTYNPSPLPS. Positions 588–635 form a coiled coil; it reads MRCEEYVKKENEVEQTVKSLEKELEEIKSKCAQLALLVDAKKKEMQQV.

It belongs to the MORC ATPase protein family. As to quaternary structure, homodimer and heterodimer with MORC6. Component of an RNA-directed DNA methylation (RdDM) complex that contains at least MORC6, MORC1/CRT1, MORC2, SWI3D and SUVH9. Binds directly to SUVH2 and SUVH9. Interacts with the resistance proteins RCY1, RPM1, SNC1, RPP8, SSI4 and RPS2. The interactions with various resistance proteins are disrupted when these resistance proteins are activated. Interacts with the PAMP recognition receptor FLS2. Mg(2+) serves as cofactor. Requires Mn(2+) as cofactor. Expressed constitutively.

It localises to the nucleus. The protein localises to the endosome. Its function is as follows. Mediator of defense signaling triggered by distinct classes of R proteins. Required during hypersensitive response (HR) that confers disease resistance to turnip crinkle virus (TCV). Exhibits ATPase activity. Contributes to resistance against Pseudomonas syringae and Hyaloperonospora arabidopsidis, at early stages prior to cytosolic calcium ions Ca(2+) accumulation. Required for pathogen-associated molecular pattern (PAMP)-triggered immunity (PTI), basal resistance, non-host resistance and systemic acquired resistance (SAR). Binds DNA/RNA in a non-specific manner and exhibits endonuclease activity. Probably involved in DNA repair. Required for both RPP8- and SSI4-mediated resistance responses, thus being involved in both TIR- and CC-NB-LRR pathways. Involved in RNA-directed DNA methylation (RdDM) as a component of the RdDM machinery and required for gene silencing. May also be involved in the regulation of chromatin architecture to maintain gene silencing. In Arabidopsis thaliana (Mouse-ear cress), this protein is Protein MICRORCHIDIA 1.